Reading from the N-terminus, the 388-residue chain is Xylose isomerase (388 aa).

Residues His-54 and Asp-57 contribute to the active site. Mg(2+) is bound by residues Glu-181, Glu-217, His-220, Asp-245, Asp-255, Asp-257, and Asp-287.

Belongs to the xylose isomerase family. Homotetramer. Requires Mg(2+) as cofactor.

The protein localises to the cytoplasm. It catalyses the reaction alpha-D-xylose = alpha-D-xylulofuranose. Involved in D-xylose catabolism. The protein is Xylose isomerase (xylA) of Streptomyces rubiginosus.